The sequence spans 242 residues: MEGWQRAFVLHSRPWSETSLMLDVFTEESGRVRLVAKGARSKRSNLKGALQPFTPLLLRYSGRGEVKTLRSAEAVSLALPLSGITLYSGLYINELLSRVLEYETRFSELFFDYLNCIQALAGTTGSPEPALRRFELALLGHLGYGVNFTHCAGSGERVDDTMTYRYREEKGFFASVVIDNNTFTGRHLKALDAREFPDVDTLRAAKRFTRMALKPYLGGKPLKSRELFRQFMPKRTVKTKKD.

It belongs to the RecO family. Monomer.

Its function is as follows. Involved in DNA repair and RecF pathway recombination. The polypeptide is DNA repair protein RecO (Salmonella schwarzengrund (strain CVM19633)).